We begin with the raw amino-acid sequence, 444 residues long: MKLYAPWQRAFEKIATPFEQFLHAQTTTGLMLMLMTVVALLLANSPLSDEYLHIFHTNIDIFVGNYGFSKSIHHWINDGLMAIFFFIIGLEIKRNILVGELSNIKVAMLPILAAIGGMALPALIYYAINYGDIGEAGWGIPMATDIAFAISALVLLGRRVSASLVTFLVALAIVDDLGAVVVIALFYTQEINMLPLLFAFISFLVLVSFNRFGIHAILPYFVVGFIMWLFMLESGIHATVAGVIAAMAIPSRPKYTPMDFTKSVKSRLDEYDNYPIEDNYMLHEQQKAILQNVKDKIDAISSPSARLEHSLHLPVSLVVIPLFALANAGVSINFSSAYDTLLQPISLGVMAGLVFGKVFGIAGISYLAIKLGIAKLPEGSTMSQVFGVAFLGGIGFTMSIFIAELAFAGNSELVFQAKIGILAASLFAGIFGFIWLRFIAKSAN.

11 helical membrane-spanning segments follow: residues 27–47 (TTGL…NSPL), 72–92 (IHHW…GLEI), 108–128 (MLPI…YYAI), 136–156 (AGWG…LVLL), 167–187 (FLVA…ALFY), 190–210 (EINM…VSFN), 212–232 (FGIH…LFML), 312–332 (HLPV…GVSI), 349–369 (VMAG…YLAI), 385–405 (VFGV…IAEL), and 419–439 (IGIL…LRFI).

It belongs to the NhaA Na(+)/H(+) (TC 2.A.33) antiporter family.

Its subcellular location is the cell inner membrane. It carries out the reaction Na(+)(in) + 2 H(+)(out) = Na(+)(out) + 2 H(+)(in). Na(+)/H(+) antiporter that extrudes sodium in exchange for external protons. The polypeptide is Na(+)/H(+) antiporter NhaA (Sulfurimonas denitrificans (strain ATCC 33889 / DSM 1251) (Thiomicrospira denitrificans (strain ATCC 33889 / DSM 1251))).